A 273-amino-acid chain; its full sequence is Ribosomal RNA small subunit methyltransferase A (273 aa).

Residues asparagine 18, leucine 20, glycine 45, glutamate 66, aspartate 91, and asparagine 113 each contribute to the S-adenosyl-L-methionine site.

Belongs to the class I-like SAM-binding methyltransferase superfamily. rRNA adenine N(6)-methyltransferase family. RsmA subfamily.

The protein resides in the cytoplasm. It carries out the reaction adenosine(1518)/adenosine(1519) in 16S rRNA + 4 S-adenosyl-L-methionine = N(6)-dimethyladenosine(1518)/N(6)-dimethyladenosine(1519) in 16S rRNA + 4 S-adenosyl-L-homocysteine + 4 H(+). Its function is as follows. Specifically dimethylates two adjacent adenosines (A1518 and A1519) in the loop of a conserved hairpin near the 3'-end of 16S rRNA in the 30S particle. May play a critical role in biogenesis of 30S subunits. The chain is Ribosomal RNA small subunit methyltransferase A from Salmonella newport (strain SL254).